Consider the following 218-residue polypeptide: Dual specificity protein phosphatase TpbA (218 aa).

The N-terminal stretch at 1 to 28 (MHRSPLAWLRLLLAAVLGAFLLGGPLHA) is a signal peptide. Residues 44–188 (DPSINLYRMS…YVRGADVDGL (145 aa)) enclose the Tyrosine-protein phosphatase domain. The active-site Proton donor/acceptor is the Asp105. The Phosphocysteine intermediate role is filled by Cys132.

It belongs to the protein-tyrosine phosphatase family. In terms of assembly, monomer in solution.

The protein localises to the periplasm. The enzyme catalyses O-phospho-L-tyrosyl-[protein] + H2O = L-tyrosyl-[protein] + phosphate. It carries out the reaction O-phospho-L-threonyl-[protein] + H2O = L-threonyl-[protein] + phosphate. The catalysed reaction is O-phospho-L-seryl-[protein] + H2O = L-seryl-[protein] + phosphate. With respect to regulation, the phosphatase activity is completely inhibited by trisodium orthovanadate, a tyrosine phosphatase specific inhibitor. Functionally, phosphatase that regulates diverse phenotypes in P.aeruginosa via regulation of the concentration of cellular c-di-GMP. Acts by dephosphorylating the membrane-anchored diguanylate cyclase TpbB at tyrosine and serine/threonine sites, leading to inactivation of TpbB and reduced c-di-GMP production. The reduced cellular c-di-GMP concentration leads to reduced adhesin expression, reduced extracellular polysaccharide (EPS) production, pellicule production, cell aggregation and biofilm formation, and enhanced swimming and swarming. It affects colony morphology and controls rugose colony formation. TpbA also acts as a positive regulator of extracellular DNA (eDNA, a major component of the biofilm matrix) and cell lysis by reducing c-di-GMP concentrations. In vitro shows phosphatase activity toward p-nitrophenyl phosphate (pNPP), tyrosine phosphopeptides and a threonine phosphopeptide. Does not have phosphodiesterases (PDE) activity, and cannot degrade c-di-GMP. This is Dual specificity protein phosphatase TpbA from Pseudomonas aeruginosa (strain UCBPP-PA14).